The primary structure comprises 298 residues: N-acetylmuramic acid 6-phosphate etherase (298 aa).

An SIS domain is found at 55–218; that stretch reads IHAQVSGGGR…STGLMIKSGK (164 aa). Glutamate 83 (proton donor) is an active-site residue. Residue glutamate 114 is part of the active site.

Belongs to the GCKR-like family. MurNAc-6-P etherase subfamily. As to quaternary structure, homodimer.

It carries out the reaction N-acetyl-D-muramate 6-phosphate + H2O = N-acetyl-D-glucosamine 6-phosphate + (R)-lactate. Its pathway is amino-sugar metabolism; 1,6-anhydro-N-acetylmuramate degradation. It participates in amino-sugar metabolism; N-acetylmuramate degradation. The protein operates within cell wall biogenesis; peptidoglycan recycling. In terms of biological role, specifically catalyzes the cleavage of the D-lactyl ether substituent of MurNAc 6-phosphate, producing GlcNAc 6-phosphate and D-lactate. Together with AnmK, is also required for the utilization of anhydro-N-acetylmuramic acid (anhMurNAc) either imported from the medium or derived from its own cell wall murein, and thus plays a role in cell wall recycling. In Escherichia coli O17:K52:H18 (strain UMN026 / ExPEC), this protein is N-acetylmuramic acid 6-phosphate etherase.